A 263-amino-acid chain; its full sequence is Oxidoreductase UcpA (263 aa).

10-32 (LITGALQGIGEGIARTFARHGAN) provides a ligand contact to NAD(+). S141 is a binding site for substrate. The Proton acceptor role is filled by Y155.

The protein belongs to the short-chain dehydrogenases/reductases (SDR) family.

The polypeptide is Oxidoreductase UcpA (ucpA) (Escherichia coli O157:H7).